We begin with the raw amino-acid sequence, 338 residues long: tRNA N6-adenosine threonylcarbamoyltransferase (338 aa).

Residues H112 and H116 each coordinate Fe cation. Substrate is bound by residues 135–139 (LVSGG), D168, G181, and N273. D301 provides a ligand contact to Fe cation.

Belongs to the KAE1 / TsaD family. Fe(2+) serves as cofactor.

It localises to the cytoplasm. The enzyme catalyses L-threonylcarbamoyladenylate + adenosine(37) in tRNA = N(6)-L-threonylcarbamoyladenosine(37) in tRNA + AMP + H(+). In terms of biological role, required for the formation of a threonylcarbamoyl group on adenosine at position 37 (t(6)A37) in tRNAs that read codons beginning with adenine. Is involved in the transfer of the threonylcarbamoyl moiety of threonylcarbamoyl-AMP (TC-AMP) to the N6 group of A37, together with TsaE and TsaB. TsaD likely plays a direct catalytic role in this reaction. This chain is tRNA N6-adenosine threonylcarbamoyltransferase, found in Buchnera aphidicola subsp. Baizongia pistaciae (strain Bp).